Consider the following 511-residue polypeptide: MEEFKVYFEKDGSRQQYFLYPLLFQEYIYALAHNHVLNGLIFYESSENFVYDNKFSLIIVKRLITQMYQQNSLSNLVNDSNRNRLVRQNKNFYYQTILEGFSVIMEIPFSIIFLSSVEEKKAKIPKIQNLRSIHATFPFLEDKLSHLNHVSDILIPYPIHLEILVQVLQGWIQDVPSLHLLRFFLHEFHNWNSLITPKKSISFLFSKGNQRLFLFLYNSYVFECESALVFLRKQSFYLRSTSFGTFVERTHFYGKIEHIVVVRRKNFQKALSLFKDPFIHYIRYKGKSILASKGTHFLMKKWKYHLLNFWQCHFDFWSQPHRIHINQLSNHSFYFMGYLSSVRINFSTVRSQMLESSFLMDTPTKKFDTIVPIIPLIGSLAKAKFCNVSGHPVSKPVWADLSDADIIDRFGRICRNLSHYHSGSSKKQSLYRVKYILRLSCARTLARKHKSTVRAFFKRLGSEFLEEFFTDKEQVLSLIFPSLRSPSHRVHKGERIWYLDIIRINDLVNNS.

Belongs to the intron maturase 2 family. MatK subfamily.

It localises to the plastid. It is found in the chloroplast. In terms of biological role, usually encoded in the trnK tRNA gene intron. Probably assists in splicing its own and other chloroplast group II introns. In Acorus calamus var. americanus (American sweet flag), this protein is Maturase K.